The primary structure comprises 231 residues: 26S proteasome non-ATPase regulatory subunit 10 (231 aa).

ANK repeat units follow at residues 3 to 36, 37 to 69, 70 to 102, 103 to 135, 136 to 168, 169 to 201, and 202 to 226; these read GCVSNIMICNLAYSGKLDELKERILADKSLATRT, DQDSRTALHWACSAGHTEIVEFLLQLGVPVNDK, DDAGWSPLHIAASAGRDEIVKALLVKGAHVNAV, NQNGCTPLHYAASKNRHEIAVMLLEGGANPDAK, DHYDATAMHRAAAKGNLKMVHILLFYKASTNIQ, DTEGNTPLHLACDEERVEEAKFLVTQGASIYIE, and NKEEKTPLQVAKGGLGLILKRLAES.

As to quaternary structure, part of transient complex containing PSMD10, PSMC4, PSMC5 and PAAF1 formed during the assembly of the 26S proteasome. Stays associated throughout the assembly of the PA700/19S RC and is released upon association with the 20S core. Interacts with PSMC4. Interacts with RB1. Interacts with CDK4. Interacts with MDM2. Interacts with RELA. Associates with a CDK4:CCND2 serine/threonine kinase complex. Interacts with ARHGDIA and increases the interaction between ARHGDIA and RHOA, hence promotes ARHGDIA inactivation of RHOA and ROCK.

Its subcellular location is the cytoplasm. It localises to the nucleus. Acts as a chaperone during the assembly of the 26S proteasome, specifically of the PA700/19S regulatory complex (RC). In the initial step of the base subcomplex assembly is part of an intermediate PSMD10:PSMC4:PSMC5:PAAF1 module which probably assembles with a PSMD5:PSMC2:PSMC1:PSMD2 module. Independently of the proteasome, regulates EGF-induced AKT activation through inhibition of the RHOA/ROCK/PTEN pathway, leading to prolonged AKT activation. Plays an important role in RAS-induced tumorigenesis. In terms of biological role, acts as an oncoprotein by being involved in negative regulation of tumor suppressors RB1 and p53/TP53. Overexpression is leading to phosphorylation of RB1 and proteasomal degradation of RB1. Regulates CDK4-mediated phosphorylation of RB1 by competing with CDKN2A for binding with CDK4. Facilitates binding of MDM2 to p53/TP53 and the mono- and polyubiquitination of p53/TP53 by MDM2 suggesting a function in targeting the TP53:MDM2 complex to the 26S proteasome. Involved in p53-independent apoptosis. Involved in regulation of NF-kappa-B by retaining it in the cytoplasm. Binds to the NF-kappa-B component RELA and accelerates its XPO1/CRM1-mediated nuclear export. The chain is 26S proteasome non-ATPase regulatory subunit 10 (Psmd10) from Mus musculus (Mouse).